Here is a 489-residue protein sequence, read N- to C-terminus: ERO1-like protein alpha (489 aa).

Positions 1-20 (METCVLLLGLFLTSVHVTTA) are cleaved as a signal peptide. Disulfide bonds link Cys27-Cys40, Cys29-Cys38, Cys77-Cys382, Cys86-Cys91, Cys86-Cys123, Cys91-Cys96, Cys200-Cys232, and Cys385-Cys388. Positions 179, 181, and 192 each coordinate FAD. FAD contacts are provided by Ser243 and His246. N-linked (GlcNAc...) asparagine glycosylation occurs at Asn271. Residues Arg278 and Arg291 each coordinate FAD. Asn375 carries N-linked (GlcNAc...) asparagine glycosylation.

The protein belongs to the EROs family. As to quaternary structure, predominantly monomer. May function both as a monomer and a homodimer. FAD serves as cofactor. In terms of processing, the Cys-86/Cys-91 and Cys-385/Cys-388 disulfide bonds constitute the redox-active center. The Cys-86/Cys-91 disulfide bond may accept electron from protein disulfide isomerase (PDI) and funnel them to the active site disulfide Cys-385/Cys-388.

Its subcellular location is the endoplasmic reticulum membrane. Its activity is regulated as follows. Enzyme activity is tightly regulated to prevent the accumulation of reactive oxygen species in the endoplasmic reticulum. Reversibly down-regulated by the formation of disulfide bonds between the active site Cys-86 and Cys-123, and between Cys-91 and Cys-96. Glutathione may be required to regulate its activity in the endoplasmic reticulum. Its function is as follows. Oxidoreductase involved in disulfide bond formation in the endoplasmic reticulum. Efficiently reoxidizes P4HB/PDI, the enzyme catalyzing protein disulfide formation, in order to allow P4HB to sustain additional rounds of disulfide formation. Following P4HB reoxidation, passes its electrons to molecular oxygen via FAD, leading to the production of reactive oxygen species (ROS) in the cell. Required for the folding of immunoglobulins. The polypeptide is ERO1-like protein alpha (Danio rerio (Zebrafish)).